Here is a 496-residue protein sequence, read N- to C-terminus: UDP-N-acetylmuramoyl-L-alanyl-D-glutamate--2,6-diaminopimelate ligase (496 aa).

UDP-N-acetyl-alpha-D-muramoyl-L-alanyl-D-glutamate is bound by residues leucine 29 and serine 31. 118 to 124 (GTNGKTT) serves as a coordination point for ATP. Residues asparagine 159, 160–161 (TT), serine 187, glutamine 193, and arginine 195 each bind UDP-N-acetyl-alpha-D-muramoyl-L-alanyl-D-glutamate. Residue lysine 227 is modified to N6-carboxylysine. Meso-2,6-diaminopimelate-binding positions include arginine 392, 416–419 (DNPR), glycine 467, and glutamate 471. The Meso-diaminopimelate recognition motif motif lies at 416-419 (DNPR).

The protein belongs to the MurCDEF family. MurE subfamily. Requires Mg(2+) as cofactor. In terms of processing, carboxylation is probably crucial for Mg(2+) binding and, consequently, for the gamma-phosphate positioning of ATP.

It localises to the cytoplasm. The enzyme catalyses UDP-N-acetyl-alpha-D-muramoyl-L-alanyl-D-glutamate + meso-2,6-diaminopimelate + ATP = UDP-N-acetyl-alpha-D-muramoyl-L-alanyl-gamma-D-glutamyl-meso-2,6-diaminopimelate + ADP + phosphate + H(+). The protein operates within cell wall biogenesis; peptidoglycan biosynthesis. In terms of biological role, catalyzes the addition of meso-diaminopimelic acid to the nucleotide precursor UDP-N-acetylmuramoyl-L-alanyl-D-glutamate (UMAG) in the biosynthesis of bacterial cell-wall peptidoglycan. This is UDP-N-acetylmuramoyl-L-alanyl-D-glutamate--2,6-diaminopimelate ligase from Wigglesworthia glossinidia brevipalpis.